We begin with the raw amino-acid sequence, 383 residues long: tRNA pseudouridine synthase B (383 aa).

Catalysis depends on Asp53, which acts as the Nucleophile.

The protein belongs to the pseudouridine synthase TruB family. Type 1 subfamily.

It catalyses the reaction uridine(55) in tRNA = pseudouridine(55) in tRNA. Responsible for synthesis of pseudouridine from uracil-55 in the psi GC loop of transfer RNAs. The protein is tRNA pseudouridine synthase B of Tropheryma whipplei (strain TW08/27) (Whipple's bacillus).